The primary structure comprises 445 residues: C4-dicarboxylate transport protein (445 aa).

8 helical membrane passes run 24 to 44, 62 to 82, 105 to 125, 163 to 183, 201 to 221, 237 to 257, 322 to 342, and 370 to 390; these read VLYIQVLIAIVLGVLVGWLSP, LIKMVIAPIIFCTVVSGIAHI, FALILGLVVGNLLPVGHGLAA, GDILQVLLFAILFGFALMALG, FGVIAIVMKAAPVGAFGAMAF, LVALFYATAALFVFVVLGVIA, IYMTLATLFIAQALGIELSFS, and AGTLAAVNPALVPGMAIVFSI.

Belongs to the dicarboxylate/amino acid:cation symporter (DAACS) (TC 2.A.23) family.

It localises to the cell inner membrane. In terms of biological role, responsible for the transport of dicarboxylates such as succinate, fumarate, and malate from the periplasm across the membrane. This chain is C4-dicarboxylate transport protein, found in Rhodopseudomonas palustris (strain HaA2).